A 466-amino-acid chain; its full sequence is Cysteine--tRNA ligase (466 aa).

Position 28 (Cys-28) interacts with Zn(2+). Positions 30 to 40 match the 'HIGH' region motif; sequence PTVYNYIHIGN. 3 residues coordinate Zn(2+): Cys-208, His-233, and Glu-237. Residues 265 to 269 carry the 'KMSKS' region motif; the sequence is KMSKS. Lys-268 lines the ATP pocket.

It belongs to the class-I aminoacyl-tRNA synthetase family. As to quaternary structure, monomer. Zn(2+) is required as a cofactor.

Its subcellular location is the cytoplasm. The enzyme catalyses tRNA(Cys) + L-cysteine + ATP = L-cysteinyl-tRNA(Cys) + AMP + diphosphate. This Staphylococcus aureus (strain Mu3 / ATCC 700698) protein is Cysteine--tRNA ligase.